The following is a 147-amino-acid chain: Augurin (147 aa).

The N-terminal stretch at 1–31 (MANSSARPAFLVMTALALLLLLCVGPGGISG) is a signal peptide. Propeptides lie at residues 32–68 (NKLK…LRRP) and 132–147 (SAHS…YDDY).

This sequence belongs to the augurin family.

The protein localises to the secreted. It is found in the cytoplasm. Its subcellular location is the apical cell membrane. In terms of biological role, probable hormone that may attenuate cell proliferation and induce senescence of oligodendrocyte and neural precursor cells in the central nervous system. ECRG4-induced senescence is characterized by G1 arrest, RB1 dephosphorylation and accelerated CCND1 and CCND3 proteasomal degradation. The sequence is that of Augurin from Bos taurus (Bovine).